A 935-amino-acid chain; its full sequence is uncharacterized protein (935 aa).

9 disordered regions span residues 1 to 32 (MDIG…QNNN), 74 to 228 (NNNN…YNNG), 265 to 287 (NNEN…NNNN), 342 to 376 (NQQK…SSKT), 394 to 414 (SPTQ…QQQY), 466 to 491 (KNIN…NNNI), 516 to 559 (PHQQ…TSTI), 727 to 755 (SPSS…ISPS), and 778 to 799 (GGGS…NVQN). Over residues 74 to 227 (NNNNNTTNNN…NNNDDNIYNN (154 aa)) the composition is skewed to low complexity. The stretch at 262 to 331 (KKNNNENKKK…NNINNNNNKI (70 aa)) forms a coiled coil. Positions 265–274 (NNENKKKNND) are enriched in basic and acidic residues. The span at 275 to 287 (NENNNYPNFNNNN) shows a compositional bias: low complexity. The segment covering 367–376 (LSHNSESSKT) has biased composition (polar residues). Over residues 397 to 414 (QQQQQQQQQQQQQQQQQY) the composition is skewed to low complexity. Residues 522–559 (SSPTSSSTSTSSTTSSSSSSSSSSSSSSSSSTSSTSTI) are compositionally biased toward low complexity. Residues 778–791 (GGGSSGGGGSGGGV) show a composition bias toward gly residues.

This is an uncharacterized protein from Dictyostelium discoideum (Social amoeba).